The sequence spans 980 residues: LRR receptor-like serine/threonine-protein kinase SIK1 (980 aa).

The N-terminal stretch at Met-1–Ala-24 is a signal peptide. The Extracellular segment spans residues Ala-25 to Thr-588. N-linked (GlcNAc...) asparagine glycosylation is found at Asn-72 and Asn-81. 20 LRR repeats span residues Phe-75 to Leu-98, Lys-99 to Cys-122, Ser-124 to Leu-146, Lys-147 to Ile-170, Pro-171 to Asn-194, Val-196 to Leu-218, Thr-219 to Cys-242, Thr-243 to Phe-265, Leu-266 to Met-289, Gln-290 to Asn-312, Ser-314 to Met-337, Ser-338 to Leu-361, Glu-362 to Cys-385, Ala-387 to Lys-408, Leu-409 to Ile-433, Asn-435 to Leu-457, Glu-458 to Asn-480, Leu-481 to Leu-505, Asn-507 to Cys-529, and Ser-531 to Lys-554. N-linked (GlcNAc...) asparagine glycans are attached at residues Asn-230 and Asn-241. Asn-312 and Asn-336 each carry an N-linked (GlcNAc...) asparagine glycan. 3 N-linked (GlcNAc...) asparagine glycosylation sites follow: Asn-381, Asn-399, and Asn-416. Residues Asn-464 and Asn-493 are each glycosylated (N-linked (GlcNAc...) asparagine). N-linked (GlcNAc...) asparagine glycosylation is found at Asn-536, Asn-541, Asn-551, and Asn-584. A helical transmembrane segment spans residues Ala-589–Tyr-609. Over Lys-610–Met-980 the chain is Cytoplasmic. Positions Leu-653–Leu-923 constitute a Protein kinase domain. ATP is bound by residues Ile-659–Val-667 and Lys-681. The Proton acceptor role is filled by Asp-778.

This sequence belongs to the protein kinase superfamily. Ser/Thr protein kinase family. In terms of processing, autophosphorylated. In terms of tissue distribution, expressed in nodes, vascular bundles of stems, and anthers.

Its subcellular location is the cell membrane. It catalyses the reaction L-seryl-[protein] + ATP = O-phospho-L-seryl-[protein] + ADP + H(+). The catalysed reaction is L-threonyl-[protein] + ATP = O-phospho-L-threonyl-[protein] + ADP + H(+). In terms of biological role, receptor kinase involved in salt drought stress responses. Acts as a positive regulator of salt and drought tolerance. May promote salt and drought tolerance through the induction of the activities of antioxidative enzymes, such as peroxidase, superoxide dismutase and catalase. May be involved in the control of stomatal development in leaf epidermis. Possesses kinase activity in vitro. Does not seem to be involved in heat tolerance. The polypeptide is LRR receptor-like serine/threonine-protein kinase SIK1 (Oryza sativa subsp. japonica (Rice)).